We begin with the raw amino-acid sequence, 516 residues long: RxLR effector protein PITG_15127 (516 aa).

The N-terminal stretch at Met1–Ala22 is a signal peptide. Positions Arg48–Arg63 match the RxLR-dEER motif.

The protein belongs to the RxLR effector family.

The protein resides in the secreted. Its subcellular location is the host cell membrane. The protein localises to the host nucleus. It is found in the host cytoplasm. Its function is as follows. Effector that enhances P.infestans colonization of Nicotiana benthamiana leaves. This is RxLR effector protein PITG_15127 from Phytophthora infestans (strain T30-4) (Potato late blight agent).